We begin with the raw amino-acid sequence, 413 residues long: Palmitoyltransferase ZDHHC6 (413 aa).

The Cytoplasmic portion of the chain corresponds to M1–P24. A helical transmembrane segment spans residues I25 to W45. Topologically, residues Y46–N57 are lumenal. A helical transmembrane segment spans residues F58–V78. Residues G79–S143 are Cytoplasmic-facing. Residues Q99–L149 form the DHHC domain. C129 serves as the catalytic S-palmitoyl cysteine intermediate. A helical membrane pass occupies residues F144–M164. Over T165–T205 the chain is Lumenal. Residues T206–I226 traverse the membrane as a helical segment. Residues Q227–R413 lie on the Cytoplasmic side of the membrane. In terms of domain architecture, SH3 spans V313 to C398. S-palmitoyl cysteine attachment occurs at residues C328, C329, and C343. The Di-lysine motif signature appears at K410–R413.

It belongs to the DHHC palmitoyltransferase family. Homooligomerizes. Interacts with SELENOK. In terms of processing, palmitoylated at 3 different sites by ZDHHC16. The combination of the different palmitoylation events strongly affects the quaternary assembly of ZDHHC6, its localization, stability and function. Palmitoylation at Cys-328 accelerates the turnover of ZDHHC6. Depalmitoylated by LYPLA2.

The protein resides in the endoplasmic reticulum membrane. The enzyme catalyses L-cysteinyl-[protein] + hexadecanoyl-CoA = S-hexadecanoyl-L-cysteinyl-[protein] + CoA. The catalysed reaction is L-cysteinyl-[protein] + octadecanoyl-CoA = S-octadecanoyl-L-cysteinyl-[protein] + CoA. Its function is as follows. Endoplasmic reticulum palmitoyl acyltransferase that mediates palmitoylation of proteins such as AMFR, CALX, ITPR1 and TFRC. Palmitoylates calnexin (CALX), which is required for its association with the ribosome-translocon complex and efficient folding of glycosylated proteins. Mediates palmitoylation of AMFR, promoting AMFR distribution to the peripheral endoplasmic reticulum. Together with SELENOK, palmitoylates ITPR1 in immune cells, leading to regulate ITPR1 stability and function. Stearoyltransferase that mediates stearoylation of TFRC to inhibit TFRC-mediated activation of the JNK pathway and mitochondrial fragmentation. In Homo sapiens (Human), this protein is Palmitoyltransferase ZDHHC6.